The sequence spans 259 residues: Phosphatidylglycerol--prolipoprotein diacylglyceryl transferase (259 aa).

Transmembrane regions (helical) follow at residues 16-36, 55-75, 92-112, and 117-137; these read FAIS…WFYA, FITY…VLLY, QGGM…YLFC, and VNFL…LFLG. R138 contributes to the a 1,2-diacyl-sn-glycero-3-phospho-(1'-sn-glycerol) binding site. 3 consecutive transmembrane segments (helical) span residues 172–192, 201–221, and 228–248; these read QLYE…YATF, ALNL…IEIF, and IGFI…MLIL.

It belongs to the Lgt family.

Its subcellular location is the cell inner membrane. The catalysed reaction is L-cysteinyl-[prolipoprotein] + a 1,2-diacyl-sn-glycero-3-phospho-(1'-sn-glycerol) = an S-1,2-diacyl-sn-glyceryl-L-cysteinyl-[prolipoprotein] + sn-glycerol 1-phosphate + H(+). Its pathway is protein modification; lipoprotein biosynthesis (diacylglyceryl transfer). In terms of biological role, catalyzes the transfer of the diacylglyceryl group from phosphatidylglycerol to the sulfhydryl group of the N-terminal cysteine of a prolipoprotein, the first step in the formation of mature lipoproteins. The chain is Phosphatidylglycerol--prolipoprotein diacylglyceryl transferase from Rickettsia canadensis (strain McKiel).